The following is a 275-amino-acid chain: Large ribosomal subunit protein uL2 (275 aa).

The tract at residues 216–275 is disordered; the sequence is GIRPQTRGSAMNPIDHPHGGGEGKTNSGRHPVTPWGMPTKGYKTRKKKASDKLIISKRKK. Basic residues predominate over residues 257-275; the sequence is YKTRKKKASDKLIISKRKK.

It belongs to the universal ribosomal protein uL2 family. Part of the 50S ribosomal subunit. Forms a bridge to the 30S subunit in the 70S ribosome.

One of the primary rRNA binding proteins. Required for association of the 30S and 50S subunits to form the 70S ribosome, for tRNA binding and peptide bond formation. It has been suggested to have peptidyltransferase activity; this is somewhat controversial. Makes several contacts with the 16S rRNA in the 70S ribosome. This chain is Large ribosomal subunit protein uL2, found in Aliarcobacter butzleri (strain RM4018) (Arcobacter butzleri).